The sequence spans 479 residues: Long-chain alcohol oxidase (479 aa).

An FAD-binding PCMH-type domain is found at 14–183 (QILRPSAAYT…LAVRIRCREQ (170 aa)). His49 carries the pros-8alpha-FAD histidine modification. Residues Thr113, Gly116, 120–123 (TGTH), and Ile173 contribute to the FAD site. Residues 241–258 (LYWLGTMDYGLILQILFL) traverse the membrane as a helical segment. FAD-binding residues include Arg369 and His425.

This sequence belongs to the oxygen-dependent FAD-linked oxidoreductase family. It depends on FAD as a cofactor.

The protein localises to the cell membrane. It catalyses the reaction a long-chain primary fatty alcohol + O2 = a long-chain fatty aldehyde + H2O2. It carries out the reaction dodecan-1-ol + O2 = dodecanal + H2O2. The catalysed reaction is tetradecan-1-ol + O2 = tetradecanal + H2O2. The enzyme catalyses octan-1-ol + O2 = octanal + H2O2. It catalyses the reaction decan-1-ol + O2 = decanal + H2O2. The protein operates within lipid metabolism; fatty acid metabolism. Functionally, in vitro catalyzes the oxidation of a range of fatty alcohols having a carbon chain length of six and above, with a reduction of O2 to H2O2. Shows the highest activity with 1-dodecanol. Is likely involved in lipid metabolism. In Uncultured marine euryarchaeote, this protein is Long-chain alcohol oxidase.